The sequence spans 546 residues: CTP synthase (546 aa).

The segment at 1-266 (MTTNYIFVTG…DDLVCTRFGI (266 aa)) is amidoligase domain. Position 14 (Ser-14) interacts with CTP. Ser-14 contacts UTP. ATP is bound by residues 15–20 (SLGKGI) and Asp-72. 2 residues coordinate Mg(2+): Asp-72 and Glu-140. CTP contacts are provided by residues 147–149 (DIE), 187–192 (KTKPTQ), and Lys-223. UTP-binding positions include 187-192 (KTKPTQ) and Lys-223. 239-241 (KDV) contacts ATP. Positions 291-542 (TIGMVGKYIE…VKAAGQYSRG (252 aa)) constitute a Glutamine amidotransferase type-1 domain. Gly-352 lines the L-glutamine pocket. Cys-379 acts as the Nucleophile; for glutamine hydrolysis in catalysis. L-glutamine contacts are provided by residues 380–383 (LGMQ), Glu-403, and Arg-470. Active-site residues include His-515 and Glu-517.

This sequence belongs to the CTP synthase family. In terms of assembly, homotetramer.

It catalyses the reaction UTP + L-glutamine + ATP + H2O = CTP + L-glutamate + ADP + phosphate + 2 H(+). The catalysed reaction is L-glutamine + H2O = L-glutamate + NH4(+). The enzyme catalyses UTP + NH4(+) + ATP = CTP + ADP + phosphate + 2 H(+). It functions in the pathway pyrimidine metabolism; CTP biosynthesis via de novo pathway; CTP from UDP: step 2/2. With respect to regulation, allosterically activated by GTP, when glutamine is the substrate; GTP has no effect on the reaction when ammonia is the substrate. The allosteric effector GTP functions by stabilizing the protein conformation that binds the tetrahedral intermediate(s) formed during glutamine hydrolysis. Inhibited by the product CTP, via allosteric rather than competitive inhibition. In terms of biological role, catalyzes the ATP-dependent amination of UTP to CTP with either L-glutamine or ammonia as the source of nitrogen. Regulates intracellular CTP levels through interactions with the four ribonucleotide triphosphates. This is CTP synthase from Vibrio parahaemolyticus serotype O3:K6 (strain RIMD 2210633).